We begin with the raw amino-acid sequence, 767 residues long: Bifunctional lysine-specific demethylase and histidyl-hydroxylase NO66 (767 aa).

Positions Thr-21–Ser-324 are disordered. Residue Ser-44 is modified to Phosphoserine. Over residues Ser-46–Ser-71 the composition is skewed to acidic residues. The segment covering Glu-72–Ser-81 has biased composition (low complexity). A compositionally biased stretch (acidic residues) spans Phe-82 to Ser-98. 2 stretches are compositionally biased toward polar residues: residues Tyr-127–Glu-137 and Glu-177–Pro-199. Residue Ser-214 is modified to Phosphoserine. Residues Pro-262–Val-279 show a composition bias toward polar residues. Residues Gly-315–Ser-324 show a composition bias toward basic and acidic residues. The region spanning Cys-420–Val-565 is the JmjC domain. Positions 466, 468, and 531 each coordinate Fe cation.

It belongs to the ROX family. NO66 subfamily. It depends on Fe(2+) as a cofactor.

It is found in the nucleus. It carries out the reaction N(6),N(6)-dimethyl-L-lysyl(36)-[histone H3] + 2 2-oxoglutarate + 2 O2 = L-lysyl(36)-[histone H3] + 2 formaldehyde + 2 succinate + 2 CO2. Oxygenase that can act as both a histone lysine demethylase and a ribosomal histidine hydroxylase. Specifically demethylates 'Lys-4' (H3K4me) and 'Lys-36' (H3K36me) of histone H3, thereby playing a central role in histone code. In Drosophila willistoni (Fruit fly), this protein is Bifunctional lysine-specific demethylase and histidyl-hydroxylase NO66.